We begin with the raw amino-acid sequence, 89 residues long: DNA/RNA-binding protein Alba (89 aa).

The protein belongs to the histone-like Alba family.

The protein localises to the cytoplasm. The protein resides in the chromosome. Binds double-stranded DNA tightly but without sequence specificity. Involved in DNA compaction. The sequence is that of DNA/RNA-binding protein Alba from Methanococcus maripaludis (strain DSM 14266 / JCM 13030 / NBRC 101832 / S2 / LL).